A 418-amino-acid polypeptide reads, in one-letter code: Light-independent protochlorophyllide reductase subunit N (418 aa).

Positions 17, 42, and 103 each coordinate [4Fe-4S] cluster.

The protein belongs to the BchN/ChlN family. As to quaternary structure, protochlorophyllide reductase is composed of three subunits; ChlL, ChlN and ChlB. Forms a heterotetramer of two ChlB and two ChlN subunits. The cofactor is [4Fe-4S] cluster.

The enzyme catalyses chlorophyllide a + oxidized 2[4Fe-4S]-[ferredoxin] + 2 ADP + 2 phosphate = protochlorophyllide a + reduced 2[4Fe-4S]-[ferredoxin] + 2 ATP + 2 H2O. The protein operates within porphyrin-containing compound metabolism; chlorophyll biosynthesis (light-independent). In terms of biological role, component of the dark-operative protochlorophyllide reductase (DPOR) that uses Mg-ATP and reduced ferredoxin to reduce ring D of protochlorophyllide (Pchlide) to form chlorophyllide a (Chlide). This reaction is light-independent. The NB-protein (ChlN-ChlB) is the catalytic component of the complex. The polypeptide is Light-independent protochlorophyllide reductase subunit N (Prochlorococcus marinus (strain MIT 9303)).